Consider the following 469-residue polypeptide: ATP synthase subunit beta (469 aa).

155-162 is a binding site for ATP; it reads GGAGCGKT.

The protein belongs to the ATPase alpha/beta chains family. In terms of assembly, F-type ATPases have 2 components, CF(1) - the catalytic core - and CF(0) - the membrane proton channel. CF(1) has five subunits: alpha(3), beta(3), gamma(1), delta(1), epsilon(1). CF(0) has three main subunits: a(1), b(2) and c(9-12). The alpha and beta chains form an alternating ring which encloses part of the gamma chain. CF(1) is attached to CF(0) by a central stalk formed by the gamma and epsilon chains, while a peripheral stalk is formed by the delta and b chains.

The protein resides in the cell inner membrane. The enzyme catalyses ATP + H2O + 4 H(+)(in) = ADP + phosphate + 5 H(+)(out). Its function is as follows. Produces ATP from ADP in the presence of a proton gradient across the membrane. The catalytic sites are hosted primarily by the beta subunits. This Syntrophus aciditrophicus (strain SB) protein is ATP synthase subunit beta.